A 376-amino-acid polypeptide reads, in one-letter code: uncharacterized protein (376 aa).

A signal peptide spans 1–22 (MVATGRIIITLLAAALDEIILA).

The protein belongs to the ascovirus HvAV ORF17 family.

This is an uncharacterized protein from Heliothis virescens ascovirus 3e (HvAV-3e).